The following is a 212-amino-acid chain: ER lumen protein-retaining receptor 2 (212 aa).

Topologically, residues 1–4 (MNIF) are lumenal. Residues 5–24 (RLTGDLSHLAAIVILLLKIW) form a helical membrane-spanning segment. Residues 25 to 32 (KTRSCAGI) lie on the Cytoplasmic side of the membrane. Residues 33–52 (SGKSQLLFALVFTTRYLDLF) form a helical membrane-spanning segment. Residues 47–48 (RY) form an interaction with the K-D-E-L motif on target proteins region. Residues 53–58 (TSFISL) lie on the Lumenal side of the membrane. Residues 59 to 79 (YNTSMKVIYLACSYATVYLIY) form a helical membrane-spanning segment. The Cytoplasmic portion of the chain corresponds to 80-92 (LKFKATYDGNHDT). The chain crosses the membrane as a helical span at residues 93 to 110 (FRVEFLVVPVGGLSFLVN). The Lumenal segment spans residues 111–116 (HDFSPL). A helical transmembrane segment spans residues 117-135 (EILWTFSIYLESVAILPQL). Residues 136 to 149 (FMISKTGEAETITT) lie on the Cytoplasmic side of the membrane. The chain crosses the membrane as a helical span at residues 150-168 (HYLFFLGLYRALYLVNWIW). Residues 159-169 (RALYLVNWIWR) form an interaction with the K-D-E-L motif on target proteins region. The Lumenal portion of the chain corresponds to 169–178 (RFYFEGFFDL). The helical transmembrane segment at 179–199 (IAVVAGVVQTILYCDFFYLYI) threads the bilayer. Residues 200-212 (TKVLKGKKLSLPA) are Cytoplasmic-facing. The segment at 204–207 (KGKK) is important for recycling of cargo proteins with the sequence motif K-D-E-L from the Golgi to the endoplasmic reticulum.

This sequence belongs to the ERD2 family.

Its subcellular location is the endoplasmic reticulum membrane. It is found in the golgi apparatus membrane. It localises to the cytoplasmic vesicle. The protein localises to the COPI-coated vesicle membrane. Membrane receptor that binds the K-D-E-L sequence motif in the C-terminal part of endoplasmic reticulum resident proteins and maintains their localization in that compartment by participating to their vesicle-mediated recycling back from the Golgi. Binding is pH dependent, and is optimal at pH 5-5.4. This is ER lumen protein-retaining receptor 2 (KDELR2) from Homo sapiens (Human).